A 529-amino-acid chain; its full sequence is Bifunctional purine biosynthesis protein PurH (529 aa).

Residues 1–148 (MQQRRPVRRA…KNHKDVAIVV (148 aa)) enclose the MGS-like domain.

The protein belongs to the PurH family.

The enzyme catalyses (6R)-10-formyltetrahydrofolate + 5-amino-1-(5-phospho-beta-D-ribosyl)imidazole-4-carboxamide = 5-formamido-1-(5-phospho-D-ribosyl)imidazole-4-carboxamide + (6S)-5,6,7,8-tetrahydrofolate. The catalysed reaction is IMP + H2O = 5-formamido-1-(5-phospho-D-ribosyl)imidazole-4-carboxamide. The protein operates within purine metabolism; IMP biosynthesis via de novo pathway; 5-formamido-1-(5-phospho-D-ribosyl)imidazole-4-carboxamide from 5-amino-1-(5-phospho-D-ribosyl)imidazole-4-carboxamide (10-formyl THF route): step 1/1. Its pathway is purine metabolism; IMP biosynthesis via de novo pathway; IMP from 5-formamido-1-(5-phospho-D-ribosyl)imidazole-4-carboxamide: step 1/1. This is Bifunctional purine biosynthesis protein PurH from Salmonella typhi.